Consider the following 257-residue polypeptide: Zinc uptake system ATP-binding protein ZurA (257 aa).

One can recognise an ABC transporter domain in the interval 5–241; it reads IEVNNVSYHY…ADRELEILAE (237 aa). ATP is bound at residue 37–44; sequence GPNGSGKS.

Belongs to the ABC transporter superfamily.

Involved in a zinc uptake transport system. In Listeria monocytogenes serovar 1/2a (strain ATCC BAA-679 / EGD-e), this protein is Zinc uptake system ATP-binding protein ZurA (zurA).